A 375-amino-acid chain; its full sequence is Holliday junction branch migration complex subunit RuvB (375 aa).

Residues 1–22 (MAIVSSKQSPQPDGSKKPSQAK) show a composition bias toward polar residues. Residues 1-44 (MAIVSSKQSPQPDGSKKPSQAKSVKKSVEHSKPQQTDALLQPEA) are disordered. The interval 13–218 (DGSKKPSQAK…FGFVQRLRFY (206 aa)) is large ATPase domain (RuvB-L). Residues leucine 57, arginine 58, glycine 99, lysine 102, threonine 103, threonine 104, 165-167 (EDF), arginine 208, tyrosine 218, and arginine 255 contribute to the ATP site. Threonine 103 serves as a coordination point for Mg(2+). The tract at residues 219–289 (EADELGQIVL…IAQEALELFN (71 aa)) is small ATPAse domain (RuvB-S). The head domain (RuvB-H) stretch occupies residues 292–375 (PCGLDWTDRR…PPDEQMRLLS (84 aa)). Residues arginine 347 and arginine 352 each coordinate DNA.

It belongs to the RuvB family. As to quaternary structure, homohexamer. Forms an RuvA(8)-RuvB(12)-Holliday junction (HJ) complex. HJ DNA is sandwiched between 2 RuvA tetramers; dsDNA enters through RuvA and exits via RuvB. An RuvB hexamer assembles on each DNA strand where it exits the tetramer. Each RuvB hexamer is contacted by two RuvA subunits (via domain III) on 2 adjacent RuvB subunits; this complex drives branch migration. In the full resolvosome a probable DNA-RuvA(4)-RuvB(12)-RuvC(2) complex forms which resolves the HJ.

The protein resides in the cytoplasm. The enzyme catalyses ATP + H2O = ADP + phosphate + H(+). Functionally, the RuvA-RuvB-RuvC complex processes Holliday junction (HJ) DNA during genetic recombination and DNA repair, while the RuvA-RuvB complex plays an important role in the rescue of blocked DNA replication forks via replication fork reversal (RFR). RuvA specifically binds to HJ cruciform DNA, conferring on it an open structure. The RuvB hexamer acts as an ATP-dependent pump, pulling dsDNA into and through the RuvAB complex. RuvB forms 2 homohexamers on either side of HJ DNA bound by 1 or 2 RuvA tetramers; 4 subunits per hexamer contact DNA at a time. Coordinated motions by a converter formed by DNA-disengaged RuvB subunits stimulates ATP hydrolysis and nucleotide exchange. Immobilization of the converter enables RuvB to convert the ATP-contained energy into a lever motion, pulling 2 nucleotides of DNA out of the RuvA tetramer per ATP hydrolyzed, thus driving DNA branch migration. The RuvB motors rotate together with the DNA substrate, which together with the progressing nucleotide cycle form the mechanistic basis for DNA recombination by continuous HJ branch migration. Branch migration allows RuvC to scan DNA until it finds its consensus sequence, where it cleaves and resolves cruciform DNA. This Acaryochloris marina (strain MBIC 11017) protein is Holliday junction branch migration complex subunit RuvB.